The sequence spans 293 residues: MAVITAAMVGELRALTDAPMMECKKALTEADGDPVKAEEILRVKLGSKASKAASRVTAEGVVASCVVGNVGALVEVNCETDFVTKNDEFLALANACAKLIAEHNPADLAALGALPLDGKTLEEKRAELIGRIGENMSIRRFVRFETAGKVVSYLHGTRIGVMVDFDAADEQVGKDVAMHIAAMKPVALSSDDVPADLIAKERSVAELKAAESGKPAEIVTKMVEGSVHKYLKEVSLLNQTFVKNDKQTVEQMLKDTKSTVKAFTMYVVGEGIEKKQDDFAAEVAAQVAAAKQA.

Residues 80-83 are involved in Mg(2+) ion dislocation from EF-Tu; the sequence is TDFV.

The protein belongs to the EF-Ts family.

The protein localises to the cytoplasm. Functionally, associates with the EF-Tu.GDP complex and induces the exchange of GDP to GTP. It remains bound to the aminoacyl-tRNA.EF-Tu.GTP complex up to the GTP hydrolysis stage on the ribosome. This chain is Elongation factor Ts, found in Herminiimonas arsenicoxydans.